The chain runs to 291 residues: uncharacterized protein (291 aa).

Transmembrane regions (helical) follow at residues 13–33, 84–104, 111–131, and 219–239; these read IILI…SITI, IVLF…IGII, LLHL…FIII, and LIYC…IYYL.

Its subcellular location is the cell membrane. This is an uncharacterized protein from Ureaplasma parvum serovar 3 (strain ATCC 700970).